Here is a 135-residue protein sequence, read N- to C-terminus: Small ribosomal subunit protein uS11 (135 aa).

Over residues 1–10 (MPPKTRSQTG) the composition is skewed to polar residues. The tract at residues 1–28 (MPPKTRSQTGAKKVRRKEKKNVAHGHAH) is disordered. A compositionally biased stretch (basic residues) spans 12–28 (KKVRRKEKKNVAHGHAH).

This sequence belongs to the universal ribosomal protein uS11 family. In terms of assembly, part of the 30S ribosomal subunit. Interacts with proteins S7 and S18. Binds to IF-3.

Functionally, located on the platform of the 30S subunit, it bridges several disparate RNA helices of the 16S rRNA. Forms part of the Shine-Dalgarno cleft in the 70S ribosome. This Acidothermus cellulolyticus (strain ATCC 43068 / DSM 8971 / 11B) protein is Small ribosomal subunit protein uS11.